We begin with the raw amino-acid sequence, 320 residues long: Arylacetonitrilase (320 aa).

The CN hydrolase domain occupies 5-286; the sequence is IKASVVQAST…EGVISAELDL (282 aa). E46 (proton acceptor) is an active-site residue. Residue K133 is part of the active site. The active-site Nucleophile is C178.

Belongs to the carbon-nitrogen hydrolase superfamily. Nitrilase family.

It carries out the reaction a nitrile + 2 H2O = a carboxylate + NH4(+). Nitrilase that hydrolyzes preferentially fumaronitrile, while 3-phenylpropionitrile, beta-cyano-L-alanine and 4-cyanopyridine are transformed at much lower rates. The sequence is that of Arylacetonitrilase (nit) from Trametes versicolor (strain FP-101664) (White-rot fungus).